The following is a 634-amino-acid chain: Chaperone protein HtpG (634 aa).

The a; substrate-binding stretch occupies residues 1–344; that stretch reads MSETVSQNKE…SNDLPLNVSR (344 aa). The segment at 345–561 is b; the sequence is EILQDNKVTQ…DYEMGTQMAK (217 aa). The c stretch occupies residues 562-634; the sequence is LLAAAGQAVP…GAINKLLTKV (73 aa).

The protein belongs to the heat shock protein 90 family. As to quaternary structure, homodimer.

It is found in the cytoplasm. Functionally, molecular chaperone. Has ATPase activity. This Vibrio parahaemolyticus serotype O3:K6 (strain RIMD 2210633) protein is Chaperone protein HtpG.